The chain runs to 299 residues: Acetylglutamate kinase (299 aa).

Substrate is bound by residues 68–69, arginine 90, and asparagine 195; that span reads GG.

This sequence belongs to the acetylglutamate kinase family. ArgB subfamily.

Its subcellular location is the cytoplasm. It catalyses the reaction N-acetyl-L-glutamate + ATP = N-acetyl-L-glutamyl 5-phosphate + ADP. It participates in amino-acid biosynthesis; L-arginine biosynthesis; N(2)-acetyl-L-ornithine from L-glutamate: step 2/4. Catalyzes the ATP-dependent phosphorylation of N-acetyl-L-glutamate. The sequence is that of Acetylglutamate kinase from Erythrobacter litoralis (strain HTCC2594).